A 64-amino-acid polypeptide reads, in one-letter code: Conotoxin VnMLCL-05 (64 aa).

The N-terminal stretch at 1 to 19 (MLCLPVFIILLLLASPAAP) is a signal peptide. Positions 20 to 43 (NPLQTRIQSNLIRAGPEDANIKTD) are excised as a propeptide. Lys-63 carries the post-translational modification Lysine amide.

This sequence belongs to the conotoxin T superfamily. In terms of tissue distribution, expressed by the venom duct.

The protein resides in the secreted. In Conus ventricosus (Mediterranean cone), this protein is Conotoxin VnMLCL-05.